Here is a 569-residue protein sequence, read N- to C-terminus: Hemin/hemoglobin-binding protein 2 (569 aa).

Positions 1–28 (MKKLWKKGLVAFLALTLIFQLIPGFASA) are cleaved as a signal peptide. NEAT domains follow at residues 34–173 (KDGG…FKVI), 184–307 (LSDG…ATAA), and 360–484 (LNNH…IKDI). Heme-binding positions include 204–205 (SS), Tyr-280, and Tyr-289. Positions 307–357 (ASSYPGSDETPPVVNPGETNPPVTKPDPGTTNPPVTTPPTTPSKPAVVDPK) are disordered. The segment covering 502–511 (TGNVASNNNA) has biased composition (polar residues). The segment at 502 to 537 (TGNVASNNNAGPKLAKPDFDDTNSVQKTASKTEKNA) is disordered. The NXZTN sorting signal motif lies at 536-540 (NAKTN). Position 539 is a pentaglycyl murein peptidoglycan amidated threonine (Thr-539). The propeptide at 540–569 (NDSSSMVWYITLFGASFLYLAYRLKRKRLS) is removed by sortase B.

The protein resides in the cell surface. It localises to the secreted. Its subcellular location is the cell wall. Its activity is regulated as follows. Is overexpressed in mecA, clpC and clpP mutants, suggesting the protein level is controlled by MecA, ClpC and ClpP (at protein level). In terms of biological role, acts as an extracellular and cell wall-bound hemophore; scavenges host heme and hemoglobin from the environment and also serves as a cell wall receptor for both. At low hemin (Hn) and hemoglobin (Hb) concentrations adsorbs Hn/Hb and presumably directs it to membrane transporters. Soluble Hbp2 can probably pass Hn/Hb to cell wall-anchored Hbp2, and both forms can accept Hn/Hb from Hbp1. May be involved in crossing the digestive barrier in infected animals. Binds host hemin. Binds host hemoglobin with affinity in the nanomolar range. The sequence is that of Hemin/hemoglobin-binding protein 2 from Listeria monocytogenes serovar 1/2a (strain ATCC BAA-679 / EGD-e).